Reading from the N-terminus, the 482-residue chain is Cysteine--tRNA ligase (482 aa).

Residue Cys-29 participates in Zn(2+) binding. The 'HIGH' region motif lies at 31–41; sequence VTVYDYCHLGH. Zn(2+) is bound by residues Cys-213, His-238, and Glu-242. Residues 275–279 carry the 'KMSKS' region motif; sequence KMSKS. Lys-278 serves as a coordination point for ATP.

This sequence belongs to the class-I aminoacyl-tRNA synthetase family. As to quaternary structure, monomer. It depends on Zn(2+) as a cofactor.

The protein localises to the cytoplasm. It carries out the reaction tRNA(Cys) + L-cysteine + ATP = L-cysteinyl-tRNA(Cys) + AMP + diphosphate. The sequence is that of Cysteine--tRNA ligase from Gloeobacter violaceus (strain ATCC 29082 / PCC 7421).